The sequence spans 385 residues: Lysine 6-dehydrogenase (385 aa).

The protein belongs to the saccharopine dehydrogenase family. In terms of assembly, homohexamer.

The enzyme catalyses L-lysine + NAD(+) = L-1-piperideine-6-carboxylate + NH4(+) + NADH + 2 H(+). Catalyzes the oxidative deamination of L-lysine in the presence of NAD. Can also use (S)-(2-aminoethyl)-L-cysteine as a substrate, but more slowly. Can use both NAD and NADP but the preferred substrate is NAD. The sequence is that of Lysine 6-dehydrogenase (lysDH) from Geobacillus stearothermophilus (Bacillus stearothermophilus).